A 389-amino-acid polypeptide reads, in one-letter code: Acetate kinase (389 aa).

Asn-7 is a Mg(2+) binding site. Lys-14 is an ATP binding site. Arg-88 provides a ligand contact to substrate. Asp-145 functions as the Proton donor/acceptor in the catalytic mechanism. ATP-binding positions include 205 to 209 (HLGNG), 279 to 281 (DLR), and 324 to 328 (GIGEN). Glu-375 serves as a coordination point for Mg(2+).

This sequence belongs to the acetokinase family. As to quaternary structure, homodimer. It depends on Mg(2+) as a cofactor. Mn(2+) serves as cofactor.

Its subcellular location is the cytoplasm. It carries out the reaction acetate + ATP = acetyl phosphate + ADP. The protein operates within metabolic intermediate biosynthesis; acetyl-CoA biosynthesis; acetyl-CoA from acetate: step 1/2. Catalyzes the formation of acetyl phosphate from acetate and ATP. Can also catalyze the reverse reaction. This is Acetate kinase from Sulfurimonas denitrificans (strain ATCC 33889 / DSM 1251) (Thiomicrospira denitrificans (strain ATCC 33889 / DSM 1251)).